The chain runs to 83 residues: Putative defensin-like protein 110 (83 aa).

A signal peptide spans 1–24; the sequence is MAITKKNLIAFVFTILFVISYVHC. 4 disulfide bridges follow: cysteine 43/cysteine 81, cysteine 49/cysteine 73, cysteine 59/cysteine 79, and cysteine 63/cysteine 80.

The protein belongs to the DEFL family.

Its subcellular location is the secreted. The sequence is that of Putative defensin-like protein 110 from Arabidopsis thaliana (Mouse-ear cress).